Consider the following 462-residue polypeptide: Argininosuccinate lyase (462 aa).

The protein belongs to the lyase 1 family. Argininosuccinate lyase subfamily.

It localises to the cytoplasm. The catalysed reaction is 2-(N(omega)-L-arginino)succinate = fumarate + L-arginine. The protein operates within amino-acid biosynthesis; L-arginine biosynthesis; L-arginine from L-ornithine and carbamoyl phosphate: step 3/3. The sequence is that of Argininosuccinate lyase from Methylobacterium sp. (strain 4-46).